The chain runs to 576 residues: Arginine--tRNA ligase (576 aa).

The 'HIGH' region signature appears at 122-132; sequence PNVAKEMHVGH.

The protein belongs to the class-I aminoacyl-tRNA synthetase family. Monomer.

It localises to the cytoplasm. The enzyme catalyses tRNA(Arg) + L-arginine + ATP = L-arginyl-tRNA(Arg) + AMP + diphosphate. The polypeptide is Arginine--tRNA ligase (Hamiltonella defensa subsp. Acyrthosiphon pisum (strain 5AT)).